An 837-amino-acid chain; its full sequence is Tuftelin-interacting protein 11 (837 aa).

Composition is skewed to basic and acidic residues over residues 1 to 13 (MSLS…GEGR) and 53 to 64 (VWAERDSDDERP). 3 disordered regions span residues 1-21 (MSLS…DDER), 53-72 (VWAE…KRAR), and 85-133 (LKKG…KGFA). Phosphoserine occurs at positions 2, 59, and 98. The span at 91 to 102 (EEAELEDSDDEE) shows a compositional bias: acidic residues. The segment covering 103–116 (RPVKQDDFPKDFGP) has biased composition (basic and acidic residues). Ser144 carries the phosphoserine modification. The 47-residue stretch at 149 to 195 (TKGIGQKLLQKMGYVPGRGLGKNAQGIINPIEAKQRKGKGAVGAYGS) folds into the G-patch domain. The disordered stretch occupies residues 179-236 (IEAKQRKGKGAVGAYGSERTTQSMQDFPVVDSEEEAEEEFQKGLSQWRKDPSGSKKKP). A Phosphoserine modification is found at Ser210. A Nuclear localization signal motif is present at residues 700–705 (VKDKFN). Residues 710–734 (IMNRAVSSNVGAYMQPGARENIAYL) are required for nuclear speckle localization.

This sequence belongs to the TFP11/STIP family. In terms of assembly, identified in the spliceosome C complex. Found in the Intron Large (IL) complex, a post-mRNA release spliceosomal complex containing the excised intron, U2, U5 and U6 snRNPs, and splicing factors. Interacts with TUFT1. Interacts with DHX15; indicative for a recruitment of DHX15 to the IL complex. Interacts with GCFC2.

The protein resides in the cytoplasm. Its subcellular location is the nucleus. Functionally, involved in pre-mRNA splicing, specifically in spliceosome disassembly during late-stage splicing events. Intron turnover seems to proceed through reactions in two lariat-intron associated complexes termed Intron Large (IL) and Intron Small (IS). In cooperation with DHX15 seems to mediate the transition of the U2, U5 and U6 snRNP-containing IL complex to the snRNP-free IS complex leading to efficient debranching and turnover of excised introns. May play a role in the differentiation of ameloblasts and odontoblasts or in the forming of the enamel extracellular matrix. This is Tuftelin-interacting protein 11 (TFIP11) from Macaca fascicularis (Crab-eating macaque).